A 625-amino-acid chain; its full sequence is tRNA uridine 5-carboxymethylaminomethyl modification enzyme MnmG (625 aa).

FAD is bound by residues 9–14 (GGGHAG), Val-121, and Ser-176. NAD(+) is bound at residue 270 to 284 (GPRYCPSIEDKIYRF). Gln-367 is an FAD binding site.

It belongs to the MnmG family. Homodimer. Heterotetramer of two MnmE and two MnmG subunits. The cofactor is FAD.

The protein localises to the cytoplasm. NAD-binding protein involved in the addition of a carboxymethylaminomethyl (cmnm) group at the wobble position (U34) of certain tRNAs, forming tRNA-cmnm(5)s(2)U34. This Nitratiruptor sp. (strain SB155-2) protein is tRNA uridine 5-carboxymethylaminomethyl modification enzyme MnmG.